The primary structure comprises 233 residues: Nucleoside diphosphate kinase 2, chloroplastic (233 aa).

The N-terminal 67 residues, 1 to 67, are a transit peptide targeting the chloroplast; the sequence is MEAMSGLSSP…LISHSLPRKK (67 aa). ATP-binding residues include lysine 93, phenylalanine 141, arginine 169, threonine 175, arginine 186, and asparagine 196. Histidine 199 serves as the catalytic Pros-phosphohistidine intermediate.

It belongs to the NDK family. Requires Mg(2+) as cofactor.

It localises to the plastid. Its subcellular location is the chloroplast. It carries out the reaction a 2'-deoxyribonucleoside 5'-diphosphate + ATP = a 2'-deoxyribonucleoside 5'-triphosphate + ADP. The catalysed reaction is a ribonucleoside 5'-diphosphate + ATP = a ribonucleoside 5'-triphosphate + ADP. Functionally, major role in the synthesis of nucleoside triphosphates other than ATP. The ATP gamma phosphate is transferred to the NDP beta phosphate via a ping-pong mechanism, using a phosphorylated active-site intermediate. The sequence is that of Nucleoside diphosphate kinase 2, chloroplastic (NDPK2) from Spinacia oleracea (Spinach).